Consider the following 130-residue polypeptide: Protein ApaG (130 aa).

One can recognise an ApaG domain in the interval Arg-3–Arg-127.

The sequence is that of Protein ApaG from Rhodopseudomonas palustris (strain ATCC BAA-98 / CGA009).